Here is a 177-residue protein sequence, read N- to C-terminus: GTP-dependent dephospho-CoA kinase (177 aa).

GTP is bound by residues Gly25, Tyr31, Asp48, Val49, Val50, Asp67, Lys69, Glu124, and Asp147.

Belongs to the GTP-dependent DPCK family. In terms of assembly, monomer in solution.

It carries out the reaction 3'-dephospho-CoA + GTP = GDP + CoA + H(+). The protein operates within cofactor biosynthesis; coenzyme A biosynthesis. Its function is as follows. Catalyzes the GTP-dependent phosphorylation of the 3'-hydroxyl group of dephosphocoenzyme A to form coenzyme A (CoA). Can also use UTP, with lower efficiency and has weak activity with ATP, but shows a strong preference for GTP as the phosphate donor. The sequence is that of GTP-dependent dephospho-CoA kinase from Thermococcus kodakarensis (strain ATCC BAA-918 / JCM 12380 / KOD1) (Pyrococcus kodakaraensis (strain KOD1)).